Here is a 258-residue protein sequence, read N- to C-terminus: Retron Ec83 putative HNH endonuclease (258 aa).

Its function is as follows. Putative HNH endonuclease component of antiviral defense system retron Ec83, composed of a non-coding RNA (ncRNA), a reverse transcriptase (RT), a probable ATPase and this protein. Expression of retron Ec78 confers protection against bacteriophage T2, T4 and T6. At multiplicity of infection (MOI) of 0.02 cultures slow growth when infected with T4 but do not collapse, at MOI 2 cultures enter growth stasis. The chain is Retron Ec83 putative HNH endonuclease from Escherichia coli.